We begin with the raw amino-acid sequence, 430 residues long: Adenylosuccinate synthetase (430 aa).

Residues 12–18 (GDEGKGK) and 40–42 (GHT) each bind GTP. The Proton acceptor role is filled by Asp13. Asp13 and Gly40 together coordinate Mg(2+). Residues 13–16 (DEGK), 38–41 (NAGH), Thr129, Arg143, Gln224, Thr239, and Arg303 contribute to the IMP site. His41 functions as the Proton donor in the catalytic mechanism. 299 to 305 (TVSNRER) provides a ligand contact to substrate. Residues Arg305, 331–333 (KLD), and 413–415 (STG) contribute to the GTP site.

This sequence belongs to the adenylosuccinate synthetase family. As to quaternary structure, homodimer. The cofactor is Mg(2+).

The protein localises to the cytoplasm. It carries out the reaction IMP + L-aspartate + GTP = N(6)-(1,2-dicarboxyethyl)-AMP + GDP + phosphate + 2 H(+). It participates in purine metabolism; AMP biosynthesis via de novo pathway; AMP from IMP: step 1/2. Its function is as follows. Plays an important role in the de novo pathway of purine nucleotide biosynthesis. Catalyzes the first committed step in the biosynthesis of AMP from IMP. The chain is Adenylosuccinate synthetase from Ehrlichia ruminantium (strain Welgevonden).